The following is a 306-amino-acid chain: Homeobox protein Hox-C13a (306 aa).

The tract at residues 68 to 90 is disordered; that stretch reads SVYSDISSPDTGRQCPAPQTSSS. Residues 236–295 constitute a DNA-binding region (homeobox); the sequence is GRKKRVPYTKLQLKELEKEYAASKFITKDKRRRISAATNLSERQVTIWFQNRRVKEKKFI.

Belongs to the Abd-B homeobox family.

The protein resides in the nucleus. Functionally, sequence-specific transcription factor which is part of a developmental regulatory system that provides cells with specific positional identities on the anterior-posterior axis. The chain is Homeobox protein Hox-C13a (hoxc13a) from Takifugu rubripes (Japanese pufferfish).